The following is a 323-amino-acid chain: Lipoyl synthase (323 aa).

C53, C58, C64, C79, C83, C86, and S293 together coordinate [4Fe-4S] cluster. Residues 65 to 282 enclose the Radical SAM core domain; it reads WTKKQATVMI…AATARAKGFS (218 aa).

The protein belongs to the radical SAM superfamily. Lipoyl synthase family. [4Fe-4S] cluster is required as a cofactor.

Its subcellular location is the cytoplasm. It catalyses the reaction [[Fe-S] cluster scaffold protein carrying a second [4Fe-4S](2+) cluster] + N(6)-octanoyl-L-lysyl-[protein] + 2 oxidized [2Fe-2S]-[ferredoxin] + 2 S-adenosyl-L-methionine + 4 H(+) = [[Fe-S] cluster scaffold protein] + N(6)-[(R)-dihydrolipoyl]-L-lysyl-[protein] + 4 Fe(3+) + 2 hydrogen sulfide + 2 5'-deoxyadenosine + 2 L-methionine + 2 reduced [2Fe-2S]-[ferredoxin]. Its pathway is protein modification; protein lipoylation via endogenous pathway; protein N(6)-(lipoyl)lysine from octanoyl-[acyl-carrier-protein]: step 2/2. Catalyzes the radical-mediated insertion of two sulfur atoms into the C-6 and C-8 positions of the octanoyl moiety bound to the lipoyl domains of lipoate-dependent enzymes, thereby converting the octanoylated domains into lipoylated derivatives. The protein is Lipoyl synthase of Zymomonas mobilis subsp. mobilis (strain ATCC 31821 / ZM4 / CP4).